The following is a 354-amino-acid chain: Peptide chain release factor 1 (354 aa).

Q230 is modified (N5-methylglutamine).

It belongs to the prokaryotic/mitochondrial release factor family. Post-translationally, methylated by PrmC. Methylation increases the termination efficiency of RF1.

It localises to the cytoplasm. Peptide chain release factor 1 directs the termination of translation in response to the peptide chain termination codons UAG and UAA. The polypeptide is Peptide chain release factor 1 (Pelobacter propionicus (strain DSM 2379 / NBRC 103807 / OttBd1)).